We begin with the raw amino-acid sequence, 464 residues long: ATP synthase subunit beta (464 aa).

153-160 serves as a coordination point for ATP; the sequence is GGAGVGKT.

Belongs to the ATPase alpha/beta chains family. As to quaternary structure, F-type ATPases have 2 components, CF(1) - the catalytic core - and CF(0) - the membrane proton channel. CF(1) has five subunits: alpha(3), beta(3), gamma(1), delta(1), epsilon(1). CF(0) has three main subunits: a(1), b(2) and c(9-12). The alpha and beta chains form an alternating ring which encloses part of the gamma chain. CF(1) is attached to CF(0) by a central stalk formed by the gamma and epsilon chains, while a peripheral stalk is formed by the delta and b chains.

It localises to the cell inner membrane. The catalysed reaction is ATP + H2O + 4 H(+)(in) = ADP + phosphate + 5 H(+)(out). Functionally, produces ATP from ADP in the presence of a proton gradient across the membrane. The catalytic sites are hosted primarily by the beta subunits. The chain is ATP synthase subunit beta from Burkholderia ambifaria (strain ATCC BAA-244 / DSM 16087 / CCUG 44356 / LMG 19182 / AMMD) (Burkholderia cepacia (strain AMMD)).